A 498-amino-acid chain; its full sequence is Probable malate:quinone oxidoreductase 2 (498 aa).

The protein belongs to the MQO family. FAD serves as cofactor.

The catalysed reaction is (S)-malate + a quinone = a quinol + oxaloacetate. Its pathway is carbohydrate metabolism; tricarboxylic acid cycle; oxaloacetate from (S)-malate (quinone route): step 1/1. The sequence is that of Probable malate:quinone oxidoreductase 2 from Staphylococcus epidermidis (strain ATCC 12228 / FDA PCI 1200).